A 929-amino-acid polypeptide reads, in one-letter code: MPPSPPSSAAADQWNIDYVNEDHLKAFAQALSYNDVQPLDGDSSPLSPRSFSLPPESPQLSTASVKAPPPTWKYGPDNGTLRSGRDTEERVEKLTATSDFAPIHQRVSRKRQRATSQGLTYNVIRWPLLFFIFFIIYLEFSAYVITRQIVNIFEWLVAWRGYKAKLRKELRKAKTYDEWVNTAKKLDKHLGFDDWKDVEEDSYFDWALVRRVRRTLTRLRAANDTRGLMDALAVCVRANFAGTESVKMYSETFIGTKKAVEAHIKEVAACLDYVRTATDVSLEEKRAFFRAVNKHYGSSALCLSGGASFGYYHFGVIKAFLEADLLPRVITGTSAGGLCAALLCTRTDSELKELLVPELADKITACSDPFTVWFKRFRQTGARFDTIDWARRSMWFTRGSLTFKEAYTKTGRALNISVVPSDRHSPTILLNHLTAPNCLIWSAILASAAVPGILNPVVLMAKDRSGNIKPHNLGGSRFKDGSLREDIPLGSLHTQFNCNFSIVSQTNPHIHLFFFAPRGSVGRPVAHRKGKGWRGGFILSALESYIKLDLSKHFKVIRDLDLMPQILQSDWSGVFLQRFSGDLTLTPRSTIGDWFHILSDPDRPQMKRMLRVGERVAWPALGMVRNRMTVERAILRGRSEVRTALSHDRTSNDPATSLPETNPELTGALDHVPIESDVDAGFVSRSRRARNKTGSKGGDTPEEQLNLAGVFQLDESSKGVRRRKQKKSGMPLVAEPLGELPEVSPTHSPIATESPQRNYTSNFGDSFRHVRAPSLPALSSPFRSIRSNTSSSSNNVQSPSSSQRFRSQLSITRWFGGVSESSSDEEDEDLGGLQSGEATASSGEEGIPTFQLDSAVESHSDRSEDEMLHSGANVKEEYQSEESEGKIPIPGGERVTQEKIDSSMASGERLRPAGGSKGSAKTPPVQDGA.

The interval 37 to 85 (QPLDGDSSPLSPRSFSLPPESPQLSTASVKAPPPTWKYGPDNGTLRSGR) is disordered. The span at 43 to 54 (SSPLSPRSFSLP) shows a compositional bias: low complexity. A helical transmembrane segment spans residues 126–146 (WPLLFFIFFIIYLEFSAYVIT). Positions 301 to 493 (LCLSGGASFG…REDIPLGSLH (193 aa)) constitute a PNPLA domain. A GXSXG motif is present at residues 332-336 (GTSAG). Catalysis depends on Ser-334, which acts as the Nucleophile. Residue Asp-480 is the Proton acceptor of the active site. 3 disordered regions span residues 644–765 (ALSH…NFGD), 778–806 (LSSPFRSIRSNTSSSSNNVQSPSSSQRFR), and 818–929 (VSES…QDGA). Polar residues-rich tracts occupy residues 652 to 664 (NDPATSLPETNPE) and 745 to 764 (PTHSPIATESPQRNYTSNFG). Residues 779-806 (SSPFRSIRSNTSSSSNNVQSPSSSQRFR) are compositionally biased toward low complexity. A compositionally biased stretch (basic and acidic residues) spans 856-878 (VESHSDRSEDEMLHSGANVKEEY).

Belongs to the PLPL family.

Its subcellular location is the membrane. In terms of biological role, probable lipid hydrolase. The protein is Patatin-like phospholipase domain-containing protein CNE02340 of Cryptococcus neoformans var. neoformans serotype D (strain JEC21 / ATCC MYA-565) (Filobasidiella neoformans).